The following is a 64-amino-acid chain: Putative isoleucine--tRNA ligase (64 aa).

It belongs to the class-I aminoacyl-tRNA synthetase family. In terms of assembly, member of a complex that includes annexin.

It carries out the reaction tRNA(Ile) + L-isoleucine + ATP = L-isoleucyl-tRNA(Ile) + AMP + diphosphate. The chain is Putative isoleucine--tRNA ligase from Physarum polycephalum (Slime mold).